A 164-amino-acid chain; its full sequence is Putative ankyrin repeat protein RBE_0585 (164 aa).

ANK repeat units lie at residues Asn42–Leu107 and Asp126–Tyr149.

This is Putative ankyrin repeat protein RBE_0585 from Rickettsia bellii (strain RML369-C).